Reading from the N-terminus, the 241-residue chain is B9 domain-containing protein 1 (241 aa).

Residues Met1–Asn42 form a disordered region. Residues Glu20–Arg34 show a composition bias toward basic residues. Residues Phe53 to Glu197 form the C2 B9-type domain.

The protein belongs to the B9D family. Probable component of the tectonic-like complex (also named MKS complex), composed of B9d1, B9d2, Cc2d2a, Mks1 and tctn. In terms of tissue distribution, expressed in type I sensory neurons (at protein level). Expressed in spermatids and spermatocytes (at protein level).

The protein localises to the cytoplasm. It is found in the cytoskeleton. It localises to the cilium basal body. Probable component of the tectonic-like complex (also named MKS complex), a complex localized at the transition zone of primary cilia. Required for ciliary structure and function. The sequence is that of B9 domain-containing protein 1 from Drosophila melanogaster (Fruit fly).